Reading from the N-terminus, the 870-residue chain is Protein csx2 (870 aa).

The disordered stretch occupies residues 212–251; the sequence is TSPEISDAPPLSGNVDPLPINSPPLTNPVARDIDQTEPED. In terms of domain architecture, PH spans 510–614; the sequence is TSAKQGLLLA…WIEAIQYSIS (105 aa). 3 positions are modified to phosphoserine: serine 625, serine 653, and serine 655. The tract at residues 647–672 is disordered; it reads RVASVTSPSRHNSDSKEKKQTKSPSL. Basic and acidic residues predominate over residues 657 to 666; the sequence is HNSDSKEKKQ. The 122-residue stretch at 670–791 folds into the Arf-GAP domain; the sequence is PSLVKTLKEM…RFIKSSFSHD (122 aa). The C4-type zinc finger occupies 686–710; it reads CADCNTTARVEWCAINFPVVLCIDC.

The polypeptide is Protein csx2 (csx2) (Schizosaccharomyces pombe (strain 972 / ATCC 24843) (Fission yeast)).